A 454-amino-acid chain; its full sequence is Laccase-3 (454 aa).

2 Plastocyanin-like domains span residues 1 to 95 and 101 to 252; these read PGPT…GPAT and DLGV…YSGA. N-linked (GlcNAc...) asparagine glycosylation is present at Asn24. 4 residues coordinate Cu cation: His29, His31, His73, and His75. N-linked (GlcNAc...) asparagine glycans are attached at residues Asn138, Asn169, Asn218, Asn314, and Asn334. The Plastocyanin-like 3 domain occupies 319–454; it reads DVDWKKPILQ…SEGLAVQFQG (136 aa). Positions 375, 378, and 380 each coordinate Cu cation. A glycan (N-linked (GlcNAc...) asparagine) is linked at Asn395. The Cu cation site is built by His437, Cys438, His439, and His443.

The protein belongs to the multicopper oxidase family. Requires Cu cation as cofactor.

It localises to the secreted. It catalyses the reaction 4 hydroquinone + O2 = 4 benzosemiquinone + 2 H2O. Its function is as follows. Lignin degradation and detoxification of lignin-derived products. The sequence is that of Laccase-3 (lcc3) from Botryotinia fuckeliana (Noble rot fungus).